Here is a 355-residue protein sequence, read N- to C-terminus: Uroporphyrinogen decarboxylase (355 aa).

Substrate contacts are provided by residues 36–40 (RQAGR), aspartate 85, tyrosine 160, serine 215, and histidine 334.

Belongs to the uroporphyrinogen decarboxylase family. In terms of assembly, homodimer.

It localises to the cytoplasm. The enzyme catalyses uroporphyrinogen III + 4 H(+) = coproporphyrinogen III + 4 CO2. It functions in the pathway porphyrin-containing compound metabolism; protoporphyrin-IX biosynthesis; coproporphyrinogen-III from 5-aminolevulinate: step 4/4. Functionally, catalyzes the decarboxylation of four acetate groups of uroporphyrinogen-III to yield coproporphyrinogen-III. The polypeptide is Uroporphyrinogen decarboxylase (Rhodococcus erythropolis (strain PR4 / NBRC 100887)).